We begin with the raw amino-acid sequence, 251 residues long: Developmental protein SEPALLATA 1 (251 aa).

The MADS-box domain maps to 3 to 57 (RGRVELKRIENKINRQVTFAKRRNGLLKKAYELSVLCDAEVALIIFSNRGKLYEF). Residues 85-176 (AKELENSYRE…ALAMKLDDMI (92 aa)) are a coiled coil. The K-box domain occupies 88-178 (LENSYREYLK…AMKLDDMIGV (91 aa)).

As to quaternary structure, heterodimer with AGAMOUS capable of binding to CArG-box sequences. Interacts with AGL16. Interacts with TT16/AGL32. As to expression, expressed mainly in carpels, and weakly in stamens.

It is found in the nucleus. Its function is as follows. Probable transcription factor. Functions with SEPALLATA2/AGL4 and SEPALLATA3/AGL9 to ensure proper development of petals, stamens and carpels, and to prevent the indeterminate growth of the flower meristem. Forms a heterodimer via the K-box domain with AGAMOUS, that could be involved in genes regulation during floral meristem development. This is Developmental protein SEPALLATA 1 (SEP1) from Arabidopsis thaliana (Mouse-ear cress).